Consider the following 259-residue polypeptide: Type III pantothenate kinase (259 aa).

6 to 13 contacts ATP; it reads DIGNTNIT. Residue 113-116 participates in substrate binding; that stretch reads GADR. Catalysis depends on Asp115, which acts as the Proton acceptor. Asp135 lines the K(+) pocket. ATP is bound at residue Thr138. Substrate is bound at residue Thr190.

It belongs to the type III pantothenate kinase family. As to quaternary structure, homodimer. The cofactor is NH4(+). K(+) is required as a cofactor.

Its subcellular location is the cytoplasm. It catalyses the reaction (R)-pantothenate + ATP = (R)-4'-phosphopantothenate + ADP + H(+). The protein operates within cofactor biosynthesis; coenzyme A biosynthesis; CoA from (R)-pantothenate: step 1/5. Catalyzes the phosphorylation of pantothenate (Pan), the first step in CoA biosynthesis. This is Type III pantothenate kinase from Endomicrobium trichonymphae.